Reading from the N-terminus, the 229-residue chain is Ribonuclease T (229 aa).

In terms of domain architecture, Exonuclease spans 23 to 197 (VIIDVETAGF…YDTERTAELF (175 aa)). 4 residues coordinate Mg(2+): D26, E28, H184, and D189. The active-site Proton donor/acceptor is H184.

The protein belongs to the RNase T family. Homodimer. Requires Mg(2+) as cofactor.

In terms of biological role, trims short 3' overhangs of a variety of RNA species, leaving a one or two nucleotide 3' overhang. Responsible for the end-turnover of tRNA: specifically removes the terminal AMP residue from uncharged tRNA (tRNA-C-C-A). Also appears to be involved in tRNA biosynthesis. In Haemophilus influenzae (strain PittEE), this protein is Ribonuclease T.